We begin with the raw amino-acid sequence, 668 residues long: Potassium voltage-gated channel subfamily KQT member 1 (668 aa).

Residues 1-119 (MDTASSPPSA…YNFLERPTGW (119 aa)) are Cytoplasmic-facing. Ser27 bears the Phosphoserine; by PKA mark. The chain crosses the membrane as a helical span at residues 120-141 (KCFVYHFTVFLIVLVCLIFSVL). The Extracellular portion of the chain corresponds to 142–152 (STIEQYAALAT). A helical membrane pass occupies residues 153–175 (GTLFWMEIVLVVFFGTEYVVRLW). The Cytoplasmic segment spans residues 176-191 (SAGCRSKYVGIWGRLR). Residues 192 to 217 (FARKPISIIDLIVVVASMVVLCVGSK) traverse the membrane as a helical segment. At 218–225 (GQVFATSA) the chain is on the extracellular side. The chain crosses the membrane as a helical; Voltage-sensor span at residues 226–241 (IRGIRFLQILRMLHVD). Positions 237-245 (MLHVDRQGG) are interaction with KCNE3. The Cytoplasmic segment spans residues 242–259 (RQGGTWRLLGSVVFIHRQ). Gln243 lines the a 1,2-diacyl-sn-glycero-3-phospho-(1D-myo-inositol-4,5-bisphosphate) pocket. The chain crosses the membrane as a helical span at residues 260-282 (ELITTLYIGFLGLIFSSYFVYLA). Over 283–298 (EKDAVNESGRIEFGSY) the chain is Extracellular. Residue Asn288 is glycosylated (N-linked (GlcNAc...) asparagine). Positions 299–319 (ADALWWGVVTVTTIGYGDKVP) form an intramembrane region, pore-forming. The Extracellular portion of the chain corresponds to 320–321 (QT). Residues 322–347 (WVGKTIASCFSVFAISFFALPAGILG) traverse the membrane as a helical segment. The Cytoplasmic segment spans residues 348–668 (SGFALKVQQK…VPQTGPDEGS (321 aa)). The segment at 369-381 (AAASLIQTAWRCY) is interaction with CALM. 2 positions are modified to phosphoserine: Ser406 and Ser408. The interaction with CALM; calcium-dependent stretch occupies residues 514–528 (KVIRRMQYFVAKKKF). Residues 534–571 (PYDVRDVIEQYSQGHLNLMVRIKELQRRLDQSIGKPSL) are interaction with KCNE1 C-terminus. The stretch at 584-620 (SNTIGARLNRVEDKVTQLDQRLVIITDMLHQLLSMQQ) forms a coiled coil. The interval 587-615 (IGARLNRVEDKVTQLDQRLVIITDMLHQL) is interaction with AKAP9. The tract at residues 588 to 619 (GARLNRVEDKVTQLDQRLVIITDMLHQLLSMQ) is C-terminal assembly domain (tetramerization).

It belongs to the potassium channel family. KQT (TC 1.A.1.15) subfamily. Kv7.1/KCNQ1 sub-subfamily. Tetramer. Heterotetramer with KCNE1; form the native cardiac channel I(Ks) which increases the amplitude and slows down the activation kinetics of outward potassium current and targets to the membrane raft. Interacts (via C-terminus) with CALM; forms a heterooctameric structure (with 4:4 KCNQ1:CALM stoichiometry) in a calcium-independent manner. Interacts with AKAP9; targets protein kinase A (PKA) catalytic and regulatory subunits and protein phosphatase 1 (PP1) to the KCNQ1-KCNE1 complex, allowing PKA-mediated phosphorylation and increase of delayed rectifier potassium channel activity. Interacts with KCNE2; form an heterooligomer complex that targets to the membrane raft and leading to currents with an apparently instantaneous activation, a rapid deactivation process and a linear current-voltage relationship and decreases the amplitude of the outward current. Interacts with AP2M1; mediates estrogen-induced internalization via clathrin-coated vesicles. Interacts with NEDD4L; promotes internalization and decreases I(Ks) currents. Interacts with USP2; counteracts the NEDD4L-specific down-regulation of I(Ks) and restore plasma membrane localization. Heterotetramer with KCNQ5; has a voltage-gated potassium channel activity. Interacts with KCNE3; four KCNE3 molecules are bound to one KCNQ1 tetramer (4:4 KCNQ1:KCNE3 stoichiometry); alters membrane raft localization; affects KCNQ1 structure and gating properties. Interacts with KCNE4; impairs KCNQ1 localization in lipid rafts and inhibits voltage-gated potassium channel activity. Interacts with KCNE5; impairs KCNQ1 localization in lipid rafts and only conducts current upon strong and continued depolarization. Interacts with SLC5A3; forms coregulatory channel-transporter complexes that modulate Na(+)-coupled myo-inositol influx through the transporter. Phosphorylation at Ser-27 by PKA; increases delayed rectifier potassium channel activity of the KCNQ1-KCNE1 complex through a macromolecular complex that includes PKA, PP1, and the targeting protein AKAP9. In terms of processing, ubiquitinated by NEDD4L; promotes internalization. The ubiquitinylated form is internalized through a clathrin-mediated endocytosis by interacting with AP2M1 and is recycled back to the cell membrane via RAB4A and RAB11A. Post-translationally, deubiquitinated by USP2; counteracts the NEDD4L-specific down-regulation of I(Ks) and restores the membrane localization. As to expression, expressed in heart, kidney and salivary glands. Detected in the cochlea. Almost undetectable in brain, skeletal muscle and liver. Widely expressed in embryonic and neonatal tissues. Expressed in choroid plexus epithelium (at protein level).

Its subcellular location is the cell membrane. It is found in the cytoplasmic vesicle membrane. It localises to the early endosome. The protein localises to the membrane raft. The protein resides in the endoplasmic reticulum. Its subcellular location is the basolateral cell membrane. It is found in the apical cell membrane. It catalyses the reaction K(+)(in) = K(+)(out). Its activity is regulated as follows. PIP2 molecule is essential to activate KCNQ channels by inducing the coupling of the voltage-sensing domain (VSD) and the pore-forming domain (PD). Upon channel activation, PIP2 disrupts the VSD-calmodulin/CALM interactions, causing the release of CALM from the VSD which triggers the opening of the gate. Calcium potentiates KCNQ1 channel current through calcium-bound CALM. Calcium-bound CALM competes with PIP2 to stabilize the channel open state. Its function is as follows. Pore-forming subunit of the voltage-gated potassium (Kv) channel involved in the regulation of cardiomyocyte excitability and important in normal development and functions of myocardium, inner ear, stomach and colon. Associates with KCNE beta subunits that modulates current kinetics. Induces a voltage-dependent by rapidly activating and slowly deactivating potassium-selective outward current. Also promotes a delayed voltage activated potassium current showing outward rectification characteristic. During beta-adrenergic receptor stimulation participates in cardiac increases the amplitude and slows down the activation kinetics of outward potassium current I(Ks). Muscarinic agonist oxotremorine-M strongly suppresses KCNQ1/KCNE1 current. When associated with KCNE3, forms the potassium channel that is important for cyclic AMP-stimulated intestinal secretion of chloride ions. This interaction with KCNE3 is reduced by 17beta-estradiol, resulting in the reduction of currents. During conditions of increased substrate load, maintains the driving force for proximal tubular and intestinal sodium ions absorption, gastric acid secretion, and cAMP-induced jejunal chloride ions secretion. Allows the provision of potassium ions to the luminal membrane of the secretory canaliculus in the resting state as well as during stimulated acid secretion. When associated with KCNE2, forms a heterooligomer complex leading to currents with an apparently instantaneous activation, a rapid deactivation process and a linear current-voltage relationship and decreases the amplitude of the outward current. When associated with KCNE4, inhibits voltage-gated potassium channel activity. When associated with KCNE5, this complex only conducts current upon strong and continued depolarization. Also forms a heterotetramer with KCNQ5; has a voltage-gated potassium channel activity. Binds with phosphatidylinositol 4,5-bisphosphate. KCNQ1-KCNE2 channel associates with Na(+)-coupled myo-inositol symporter in the apical membrane of choroid plexus epithelium and regulates the myo-inositol gradient between blood and cerebrospinal fluid with an impact on neuron excitability. This is Potassium voltage-gated channel subfamily KQT member 1 from Mus musculus (Mouse).